The sequence spans 201 residues: Proteasome subunit beta type-2 (201 aa).

The residue at position 1 (M1) is an N-acetylmethionine.

The protein belongs to the peptidase T1B family. As to quaternary structure, the 26S proteasome consists of a 20S proteasome core and two 19S regulatory subunits. The 20S proteasome core is a barrel-shaped complex made of 28 subunits that are arranged in four stacked rings. The two outer rings are each formed by seven alpha subunits, and the two inner rings are formed by seven beta subunits. The proteolytic activity is exerted by three beta-subunits PSMB5, PSMB6 and PSMB7. In terms of tissue distribution, detected in liver (at protein level).

It is found in the cytoplasm. The protein localises to the nucleus. Its function is as follows. Non-catalytic component of the 20S core proteasome complex involved in the proteolytic degradation of most intracellular proteins. This complex plays numerous essential roles within the cell by associating with different regulatory particles. Associated with two 19S regulatory particles, forms the 26S proteasome and thus participates in the ATP-dependent degradation of ubiquitinated proteins. The 26S proteasome plays a key role in the maintenance of protein homeostasis by removing misfolded or damaged proteins that could impair cellular functions, and by removing proteins whose functions are no longer required. Associated with the PA200 or PA28, the 20S proteasome mediates ubiquitin-independent protein degradation. This type of proteolysis is required in several pathways including spermatogenesis (20S-PA200 complex) or generation of a subset of MHC class I-presented antigenic peptides (20S-PA28 complex). The protein is Proteasome subunit beta type-2 (Psmb2) of Mus musculus (Mouse).